Consider the following 311-residue polypeptide: DNA replication terminus site-binding protein (311 aa).

It belongs to the Tus family.

It is found in the cytoplasm. In terms of biological role, trans-acting protein required for termination of DNA replication. Binds to DNA replication terminator sequences (terA to terF) to prevent the passage of replication forks. The termination efficiency will be affected by the affinity of this protein for the terminator sequence. The polypeptide is DNA replication terminus site-binding protein (Yersinia pseudotuberculosis serotype O:1b (strain IP 31758)).